A 197-amino-acid polypeptide reads, in one-letter code: Pyridoxal 5'-phosphate synthase subunit PdxT (197 aa).

50 to 52 (GES) serves as a coordination point for L-glutamine. Cys-82 functions as the Nucleophile in the catalytic mechanism. Residues Arg-111 and 140 to 141 (IR) each bind L-glutamine. Catalysis depends on charge relay system residues His-176 and Glu-178.

The protein belongs to the glutaminase PdxT/SNO family. In the presence of PdxS, forms a dodecamer of heterodimers. Only shows activity in the heterodimer.

The catalysed reaction is aldehydo-D-ribose 5-phosphate + D-glyceraldehyde 3-phosphate + L-glutamine = pyridoxal 5'-phosphate + L-glutamate + phosphate + 3 H2O + H(+). It carries out the reaction L-glutamine + H2O = L-glutamate + NH4(+). The protein operates within cofactor biosynthesis; pyridoxal 5'-phosphate biosynthesis. Its function is as follows. Catalyzes the hydrolysis of glutamine to glutamate and ammonia as part of the biosynthesis of pyridoxal 5'-phosphate. The resulting ammonia molecule is channeled to the active site of PdxS. The chain is Pyridoxal 5'-phosphate synthase subunit PdxT from Streptomyces griseus subsp. griseus (strain JCM 4626 / CBS 651.72 / NBRC 13350 / KCC S-0626 / ISP 5235).